The sequence spans 137 residues: ATP synthase epsilon chain, chloroplastic (137 aa).

It belongs to the ATPase epsilon chain family. In terms of assembly, F-type ATPases have 2 components, CF(1) - the catalytic core - and CF(0) - the membrane proton channel. CF(1) has five subunits: alpha(3), beta(3), gamma(1), delta(1), epsilon(1). CF(0) has three main subunits: a, b and c.

Its subcellular location is the plastid. It localises to the chloroplast thylakoid membrane. Produces ATP from ADP in the presence of a proton gradient across the membrane. In Oryza nivara (Indian wild rice), this protein is ATP synthase epsilon chain, chloroplastic.